A 102-amino-acid polypeptide reads, in one-letter code: Small ribosomal subunit protein uS10 (102 aa).

Belongs to the universal ribosomal protein uS10 family. In terms of assembly, part of the 30S ribosomal subunit.

Its function is as follows. Involved in the binding of tRNA to the ribosomes. This is Small ribosomal subunit protein uS10 from Agrobacterium fabrum (strain C58 / ATCC 33970) (Agrobacterium tumefaciens (strain C58)).